Consider the following 355-residue polypeptide: tRNA pseudouridine synthase D (355 aa).

Aspartate 84 functions as the Nucleophile in the catalytic mechanism. The TRUD domain occupies 160-306; it reads GVPNYFGLQR…MAHERRILRL (147 aa).

The protein belongs to the pseudouridine synthase TruD family.

It carries out the reaction uridine(13) in tRNA = pseudouridine(13) in tRNA. Its function is as follows. Responsible for synthesis of pseudouridine from uracil-13 in transfer RNAs. This Pseudomonas aeruginosa (strain UCBPP-PA14) protein is tRNA pseudouridine synthase D.